Here is a 159-residue protein sequence, read N- to C-terminus: Large ribosomal subunit protein bL35c (159 aa).

Residues 1–86 (MAMASATATL…TSSPSFTVFA (86 aa)) constitute a chloroplast transit peptide.

In terms of assembly, component of the chloroplast large ribosomal subunit (LSU). Mature 70S chloroplast ribosomes of higher plants consist of a small (30S) and a large (50S) subunit. The 30S small subunit contains 1 molecule of ribosomal RNA (16S rRNA) and 24 different proteins. The 50S large subunit contains 3 rRNA molecules (23S, 5S and 4.5S rRNA) and 33 different proteins.

It is found in the plastid. Its subcellular location is the chloroplast. In terms of biological role, component of the chloroplast ribosome (chloro-ribosome), a dedicated translation machinery responsible for the synthesis of chloroplast genome-encoded proteins, including proteins of the transcription and translation machinery and components of the photosynthetic apparatus. This Spinacia oleracea (Spinach) protein is Large ribosomal subunit protein bL35c (RPL35).